Here is a 705-residue protein sequence, read N- to C-terminus: Phycobiliprotein ApcE (705 aa).

Residues 18-76 (QTVPGSTIVQAEQQDRFPQQGELRELSSYFQSGLKRLAIAEIITRNSDTIVSRAANRIF) form a phycobilin-like 1 region. The interval 77 to 145 (VGGSPLAYIE…VRIPSGFRPI (69 aa)) is phycobilin-like loop. The tract at residues 146–238 (NVARYGPRNM…YFDVLIREFE (93 aa)) is phycobilin-like 2. Cys-196 contributes to the (2R,3E)-phycocyanobilin binding site. 2 PBS-linker domains span residues 253–433 (DQQG…FVKV) and 514–691 (KIFK…SLRP). Residues 685–705 (VKASLRPAAGAQERRPEVGRR) form a disordered region. Basic and acidic residues predominate over residues 696–705 (QERRPEVGRR).

Belongs to the phycobilisome linker protein family. In terms of assembly, phycobilisomes of this organism are composed of a two cylinder core, from which six rods radiate. The core is mainly composed of allophycocyanin alpha and beta chains, and of three minor components: the allophycocyanin alpha-B chain, a 18.3 kDa polypeptide, and the anchor polypeptide L-CM. In terms of processing, contains one covalently linked bilin chromophore. This protein autochromophorylates.

The protein localises to the cellular thylakoid membrane. Functionally, this protein is postulated to act both as terminal energy acceptor (by its phycobilin-like domains) and as a linker polypeptide (by its repeats and arms) that stabilizes the phycobilisome core architecture. Has intrinsic bilin lyase activity. In Synechococcus sp. (strain ATCC 27144 / PCC 6301 / SAUG 1402/1) (Anacystis nidulans), this protein is Phycobiliprotein ApcE (apcE).